We begin with the raw amino-acid sequence, 358 residues long: Src kinase-associated phosphoprotein 2 (358 aa).

2 positions are modified to phosphoserine: serine 5 and serine 9. Residues 14-64 (PEEIRNLLADVETFVADTLKGENLSKKAKEKRESLIKKIKDVKSVYLQEFQ) form a homodimerization region. Phosphotyrosine is present on tyrosine 75. A phosphoserine mark is found at serine 87 and serine 90. The PH domain maps to 116-219 (FVIKAGYLEK…WVQQLKFILQ (104 aa)). 2 positions are modified to phosphotyrosine: tyrosine 151 and tyrosine 197. At serine 223 the chain carries Phosphoserine. The tract at residues 232–292 (ERGELYDDVD…RDSVHHTSGD (61 aa)) is disordered. A compositionally biased stretch (acidic residues) spans 255-270 (IDDEIYEELPEEEEDT). Residue tyrosine 260 is modified to Phosphotyrosine; by FYN. Residues serine 272, serine 282, and serine 285 each carry the phosphoserine modification. Basic and acidic residues predominate over residues 274–292 (KMDEQGKGSRDSVHHTSGD). An SH3 domain is found at 296–357 (DYANFYQGLW…PKAYLMEMYD (62 aa)).

It belongs to the SKAP family. In terms of assembly, interacts with LAT, GRB2, PTK2B and PRAM1. Homodimer. Interacts with FYB1, which is required for SKAP2 protein stability. Interacts with PTPNS1. Part of a complex consisting of SKAP2, FYB1 and PTPNS1. Part of a complex consisting of SKAP2, FYB1 and PIRB. May interact with actin. May interact with FYN, HCK and LYN. Interacts with FASLG. In terms of processing, dephosphorylated on Tyr-75 by PTPN22. Phosphorylated by FYN on Tyr-260. In case of infection with Y.pseudotuberculosis, dephosphorylated by bacterial phosphatase yopH. As to expression, expressed in kidney, lung, liver, spleen, bone marrow and testis. Present in T-cells, B-cells, and all cells of the myelomonocytic lineage. Present in all brain regions, with highest levels in neurons from the Purkinje cell layer, hippocampal gyrus, cortex and substantia nigra (at protein level).

It localises to the cytoplasm. Its function is as follows. May be involved in B-cell and macrophage adhesion processes. In B-cells, may act by coupling the B-cell receptor (BCR) to integrin activation. May play a role in src signaling pathway. This chain is Src kinase-associated phosphoprotein 2 (Skap2), found in Mus musculus (Mouse).